A 505-amino-acid chain; its full sequence is ATP synthase subunit alpha (505 aa).

170-177 contacts ATP; that stretch reads GDRQTGKT.

This sequence belongs to the ATPase alpha/beta chains family. In terms of assembly, F-type ATPases have 2 components, CF(1) - the catalytic core - and CF(0) - the membrane proton channel. CF(1) has five subunits: alpha(3), beta(3), gamma(1), delta(1), epsilon(1). CF(0) has four main subunits: a(1), b(1), b'(1) and c(9-12).

The protein resides in the cellular thylakoid membrane. The enzyme catalyses ATP + H2O + 4 H(+)(in) = ADP + phosphate + 5 H(+)(out). Functionally, produces ATP from ADP in the presence of a proton gradient across the membrane. The alpha chain is a regulatory subunit. This is ATP synthase subunit alpha from Prochlorococcus marinus (strain SARG / CCMP1375 / SS120).